The sequence spans 339 residues: Ketol-acid reductoisomerase (NADP(+)) (339 aa).

Residues 1 to 182 (MRVYYDRDAD…GGGRSGIIET (182 aa)) enclose the KARI N-terminal Rossmann domain. NADP(+) contacts are provided by residues 24–27 (YGSQ), Lys48, Ser51, Thr53, and 83–86 (DELQ). The active site involves His108. Gly134 serves as a coordination point for NADP(+). One can recognise a KARI C-terminal knotted domain in the interval 183-328 (NFKEECETDL…AKLRGMMPWI (146 aa)). Positions 191, 195, 227, and 231 each coordinate Mg(2+). Residue Ser252 coordinates substrate.

The protein belongs to the ketol-acid reductoisomerase family. It depends on Mg(2+) as a cofactor.

The enzyme catalyses (2R)-2,3-dihydroxy-3-methylbutanoate + NADP(+) = (2S)-2-acetolactate + NADPH + H(+). It carries out the reaction (2R,3R)-2,3-dihydroxy-3-methylpentanoate + NADP(+) = (S)-2-ethyl-2-hydroxy-3-oxobutanoate + NADPH + H(+). It participates in amino-acid biosynthesis; L-isoleucine biosynthesis; L-isoleucine from 2-oxobutanoate: step 2/4. Its pathway is amino-acid biosynthesis; L-valine biosynthesis; L-valine from pyruvate: step 2/4. Functionally, involved in the biosynthesis of branched-chain amino acids (BCAA). Catalyzes an alkyl-migration followed by a ketol-acid reduction of (S)-2-acetolactate (S2AL) to yield (R)-2,3-dihydroxy-isovalerate. In the isomerase reaction, S2AL is rearranged via a Mg-dependent methyl migration to produce 3-hydroxy-3-methyl-2-ketobutyrate (HMKB). In the reductase reaction, this 2-ketoacid undergoes a metal-dependent reduction by NADPH to yield (R)-2,3-dihydroxy-isovalerate. The chain is Ketol-acid reductoisomerase (NADP(+)) from Agrobacterium fabrum (strain C58 / ATCC 33970) (Agrobacterium tumefaciens (strain C58)).